The sequence spans 1251 residues: Phospholipid-transporting ATPase IC (1251 aa).

The disordered stretch occupies residues 1-52 (MSTERDSETTFDEESQPNDEVVPYSDDETEDELEDQGSTVEPEQNRVNREAE). The Cytoplasmic portion of the chain corresponds to 1–121 (MSTERDSETT…LFEQFKRAAN (121 aa)). Residues 25 to 35 (SDDETEDELED) are compositionally biased toward acidic residues. Basic and acidic residues predominate over residues 43–52 (EQNRVNREAE). Residues 122–142 (FYFLILLILQAIPQISTLAWY) traverse the membrane as a helical segment. Topologically, residues 143–144 (TT) are exoplasmic loop. The chain crosses the membrane as a helical span at residues 145 to 165 (LVPLLLVLGITAIKDLVDDVA). Topologically, residues 166–339 (RHKMDKEINN…RTKIDYLMNY (174 aa)) are cytoplasmic. The chain crosses the membrane as a helical span at residues 340–360 (MVYTIFIVLILVSAGLAIGHA). At 361–385 (YWEAQVGNYSWYLYDGENATPSYRG) the chain is on the exoplasmic loop side. Residues 386–406 (FLNFWGYIIVLNTMVPISLYV) form a helical membrane-spanning segment. Residues 407–952 (SVEVIRLGQS…SYIRMCKFLR (546 aa)) lie on the Cytoplasmic side of the membrane. Asp454 functions as the 4-aspartylphosphate intermediate in the catalytic mechanism. The ATP site is built by Asp454, Lys455, Thr456, Glu555, Phe596, Lys619, Arg652, Thr732, Gly733, Asp734, Arg867, and Lys873. Asp454 is a binding site for Mg(2+). Thr456 provides a ligand contact to Mg(2+). Position 893 (Asp893) interacts with Mg(2+). 2 residues coordinate ATP: Asn896 and Asp897. Mg(2+) is bound at residue Asp897. A helical transmembrane segment spans residues 953-973 (YFFYKNFAFTLVHFWYSFFNG). Residues 974–982 (YSAQTAYED) are Exoplasmic loop-facing. Residues 983-1003 (WFITLYNVLYSSLPVLLMGLL) traverse the membrane as a helical segment. The Cytoplasmic portion of the chain corresponds to 1004 to 1032 (DQDVSDKLSLRFPGLYVVGQRDLLFNYKR). A helical transmembrane segment spans residues 1033–1053 (FFVSLLHGVLTSMVLFFIPLG). The Exoplasmic loop portion of the chain corresponds to 1054-1071 (AYLQTVGQDGEAPSDYQS). Residues 1072 to 1092 (FAVTVASALVITVNFQIGLDT) form a helical membrane-spanning segment. Residues 1093–1094 (SY) lie on the Cytoplasmic side of the membrane. Residues 1095 to 1115 (WTFVNAFSIFGSIALYFGIMF) traverse the membrane as a helical segment. Residues 1116–1142 (DFHSAGIHVLFPSAFQFTGTASNALRQ) are Exoplasmic loop-facing. Residues 1143–1163 (PYIWLTIILTVAVCLLPVVAI) form a helical membrane-spanning segment. Residues 1164-1251 (RFLSMTIWPS…TAEYRRTVES (88 aa)) are Cytoplasmic-facing. The residue at position 1223 (Ser1223) is a Phosphoserine.

The protein belongs to the cation transport ATPase (P-type) (TC 3.A.3) family. Type IV subfamily. In terms of assembly, component of a P4-ATPase flippase complex which consists of a catalytic alpha subunit ATP8B1 and an accessory beta subunit TMEM30A. The flippase ATP8B1:TMEM30A complex can form an intermediate phosphoenzyme in vitro. Also interacts with beta subunit TMEM30B. Mg(2+) is required as a cofactor. Hepatocytes, bile duct, intestinal epithelial cells (cholangiocytes and ileocytes), and pancreatic acinar cells.

The protein localises to the cell membrane. It localises to the apical cell membrane. It is found in the cell projection. Its subcellular location is the stereocilium. The protein resides in the endoplasmic reticulum. The protein localises to the golgi apparatus. It carries out the reaction ATP + H2O + phospholipidSide 1 = ADP + phosphate + phospholipidSide 2.. The enzyme catalyses a 1,2-diacyl-sn-glycero-3-phosphocholine(out) + ATP + H2O = a 1,2-diacyl-sn-glycero-3-phosphocholine(in) + ADP + phosphate + H(+). It catalyses the reaction a 1,2-diacyl-sn-glycero-3-phospho-L-serine(out) + ATP + H2O = a 1,2-diacyl-sn-glycero-3-phospho-L-serine(in) + ADP + phosphate + H(+). Catalytic component of a P4-ATPase flippase complex which catalyzes the hydrolysis of ATP coupled to the transport of phospholipids, in particular phosphatidylcholines (PC), from the outer to the inner leaflet of the plasma membrane. May participate in the establishment of the canalicular membrane integrity by ensuring asymmetric distribution of phospholipids in the canicular membrane. Thus may have a role in the regulation of bile acids transport into the canaliculus, uptake of bile acids from intestinal contents into intestinal mucosa or both and protect hepatocytes from bile salts. Involved in the microvillus formation in polarized epithelial cells; the function seems to be independent from its flippase activity. Participates in correct apical membrane localization of CDC42, CFTR and SLC10A2. Enables CDC42 clustering at the apical membrane during enterocyte polarization through the interaction between CDC42 polybasic region and negatively charged membrane lipids provided by ATP8B1. Together with TMEM30A is involved in uptake of the synthetic drug alkylphospholipid perifosine. Required for the preservation of cochlear hair cells in the inner ear. According PubMed:20852622 is proposed to act as cardiolipin transporter during inflammatory injury; the function is questioned by PubMed:21475228. The polypeptide is Phospholipid-transporting ATPase IC (Mus musculus (Mouse)).